We begin with the raw amino-acid sequence, 354 residues long: UDP-N-acetylglucosamine--N-acetylmuramyl-(pentapeptide) pyrophosphoryl-undecaprenol N-acetylglucosamine transferase (354 aa).

UDP-N-acetyl-alpha-D-glucosamine contacts are provided by residues 13–15 (SGG), asparagine 125, serine 189, isoleucine 242, 261–266 (ALTVSE), and glutamine 286.

This sequence belongs to the glycosyltransferase 28 family. MurG subfamily.

The protein localises to the cell inner membrane. It carries out the reaction di-trans,octa-cis-undecaprenyl diphospho-N-acetyl-alpha-D-muramoyl-L-alanyl-D-glutamyl-meso-2,6-diaminopimeloyl-D-alanyl-D-alanine + UDP-N-acetyl-alpha-D-glucosamine = di-trans,octa-cis-undecaprenyl diphospho-[N-acetyl-alpha-D-glucosaminyl-(1-&gt;4)]-N-acetyl-alpha-D-muramoyl-L-alanyl-D-glutamyl-meso-2,6-diaminopimeloyl-D-alanyl-D-alanine + UDP + H(+). It participates in cell wall biogenesis; peptidoglycan biosynthesis. Its function is as follows. Cell wall formation. Catalyzes the transfer of a GlcNAc subunit on undecaprenyl-pyrophosphoryl-MurNAc-pentapeptide (lipid intermediate I) to form undecaprenyl-pyrophosphoryl-MurNAc-(pentapeptide)GlcNAc (lipid intermediate II). This is UDP-N-acetylglucosamine--N-acetylmuramyl-(pentapeptide) pyrophosphoryl-undecaprenol N-acetylglucosamine transferase from Buchnera aphidicola subsp. Acyrthosiphon pisum (strain APS) (Acyrthosiphon pisum symbiotic bacterium).